Reading from the N-terminus, the 424-residue chain is UPF0597 protein Shewmr7_2876 (424 aa).

It belongs to the UPF0597 family.

The protein is UPF0597 protein Shewmr7_2876 of Shewanella sp. (strain MR-7).